The chain runs to 282 residues: NAD kinase (282 aa).

The active-site Proton acceptor is the Asp-67. Residues 67 to 68, 140 to 141, His-151, Arg-170, Asp-172, and 183 to 188 each bind NAD(+); these read DG, NE, and TAYNLS.

This sequence belongs to the NAD kinase family. The cofactor is a divalent metal cation.

The protein resides in the cytoplasm. The catalysed reaction is NAD(+) + ATP = ADP + NADP(+) + H(+). In terms of biological role, involved in the regulation of the intracellular balance of NAD and NADP, and is a key enzyme in the biosynthesis of NADP. Catalyzes specifically the phosphorylation on 2'-hydroxyl of the adenosine moiety of NAD to yield NADP. The protein is NAD kinase of Halobacterium salinarum (strain ATCC 700922 / JCM 11081 / NRC-1) (Halobacterium halobium).